A 519-amino-acid polypeptide reads, in one-letter code: MSGLEQPAELSRVWRWLLLVSVAICAASGLVYELALVSLSASLNGGGIVETSLIVAGYVAALGVGAILVKPFLRWPAQTFLAVETLLGLIGGLSALVLYMTFAVVGQNLWMLVLATALIGILVGAELPLLMTMIQRGRLADARTTGSLVATLNAADYLGALLGGLAWPFILLPWLGMMRGAAAAGMINLLAALFVGCVLLRHLLPRAQFIRAVVALLVAIAVLGTVLVRSDGIVATARQQLYRDPVIYAHQSDYQDIVVTQRGADRRLYLNGGLQYSTRDEHRYTESLVYPGLSDSARTALIIGGGDGLAARELLRFPDMRITQVELDPEVIEVANTILLPDNGGAMQDPRVTVITDDAFTWLRAGGDGGQRYDAIFVDLPDPNNDTMARLYSQEFYTLALARLNDGGRMVVQSSSAYTTPDVFWRIASTMSAAGCGAVIPYHVHVPTFGDWGFQLCGPEGTELGLRGDTPSLRFLTDEVLAAAGVFGADNQPRELEPSTLDHPRVVEDLRRGYRQAGE.

The next 7 membrane-spanning stretches (helical) occupy residues 17–37, 53–73, 86–106, 109–129, 158–178, 180–200, and 208–228; these read LLLV…LALV, LIVA…KPFL, LLGL…AVVG, LWML…ELPL, LGAL…LGMM, GAAA…CVLL, and QFIR…TVLV. Positions 200–463 are spermidine synthase; the sequence is LRHLLPRAQF…FQLCGPEGTE (264 aa). A PABS domain is found at 225–459; sequence TVLVRSDGIV…GDWGFQLCGP (235 aa). Q255 contacts S-methyl-5'-thioadenosine. D307 serves as a coordination point for spermidine. Residues E326 and 358-359 contribute to the S-methyl-5'-thioadenosine site; that span reads DA. D379 serves as the catalytic Proton acceptor.

This sequence belongs to the spermidine/spermine synthase family. Homodimer or homotetramer.

The protein resides in the cell membrane. The catalysed reaction is S-adenosyl 3-(methylsulfanyl)propylamine + putrescine = S-methyl-5'-thioadenosine + spermidine + H(+). It functions in the pathway amine and polyamine biosynthesis; spermidine biosynthesis; spermidine from putrescine: step 1/1. In terms of biological role, catalyzes the irreversible transfer of a propylamine group from the amino donor S-adenosylmethioninamine (decarboxy-AdoMet) to putrescine (1,4-diaminobutane) to yield spermidine. This is Polyamine aminopropyltransferase from Corynebacterium efficiens (strain DSM 44549 / YS-314 / AJ 12310 / JCM 11189 / NBRC 100395).